The following is a 264-amino-acid chain: Acetyl-coenzyme A carboxylase carboxyl transferase subunit beta (264 aa).

Positions 4 to 264 (LWVKCKQCQQ…CGNSLEGVES (261 aa)) constitute a CoA carboxyltransferase N-terminal domain. Residues cysteine 8, cysteine 11, cysteine 27, and cysteine 29 each coordinate Zn(2+). The C4-type zinc-finger motif lies at 8–29 (CKQCQQILLTKELEKNLKVCRC).

The protein belongs to the AccD/PCCB family. In terms of assembly, acetyl-CoA carboxylase is a heterohexamer composed of biotin carboxyl carrier protein (AccB), biotin carboxylase (AccC) and two subunits each of ACCase subunit alpha (AccA) and ACCase subunit beta (AccD). Zn(2+) is required as a cofactor.

It is found in the cytoplasm. The catalysed reaction is N(6)-carboxybiotinyl-L-lysyl-[protein] + acetyl-CoA = N(6)-biotinyl-L-lysyl-[protein] + malonyl-CoA. The protein operates within lipid metabolism; malonyl-CoA biosynthesis; malonyl-CoA from acetyl-CoA: step 1/1. Component of the acetyl coenzyme A carboxylase (ACC) complex. Biotin carboxylase (BC) catalyzes the carboxylation of biotin on its carrier protein (BCCP) and then the CO(2) group is transferred by the transcarboxylase to acetyl-CoA to form malonyl-CoA. The protein is Acetyl-coenzyme A carboxylase carboxyl transferase subunit beta of Heliobacterium modesticaldum (strain ATCC 51547 / Ice1).